The sequence spans 119 residues: Large ribosomal subunit protein bL20 (119 aa).

Belongs to the bacterial ribosomal protein bL20 family.

Binds directly to 23S ribosomal RNA and is necessary for the in vitro assembly process of the 50S ribosomal subunit. It is not involved in the protein synthesizing functions of that subunit. This Xanthomonas campestris pv. campestris (strain 8004) protein is Large ribosomal subunit protein bL20.